The primary structure comprises 318 residues: Geranylfarnesyl diphosphate synthase (318 aa).

3 residues coordinate isopentenyl diphosphate: lysine 31, arginine 34, and histidine 65. Positions 72 and 76 each coordinate Mg(2+). Arginine 81 lines the an all-trans-polyprenyl diphosphate pocket. Isopentenyl diphosphate is bound at residue arginine 82. An all-trans-polyprenyl diphosphate is bound by residues lysine 166, threonine 167, and glutamine 204.

This sequence belongs to the FPP/GGPP synthase family. Homodimer. Requires Mg(2+) as cofactor.

It catalyses the reaction isopentenyl diphosphate + (2E,6E,10E)-geranylgeranyl diphosphate = (2E,6E,10E,14E)-geranylfarnesyl diphosphate + diphosphate. Probably involved in biosynthesis of the precursor for C25 (sesterterpanyl chain) moiety of C25-C25 diether (2,3-di-O-sesterterpanyl-sn-glycero) membrane lipid. Catalyzes the condensation of isopentenyl pyrophosphate with the allylic pyrophosphates to yield all-trans geranylfarnesyl diphosphate (GFPP). Geranylgeranyl diphosphate (GGPP) is the preferred substrate, however methylallyl diphosphate (DMAPP), farnesyl diphosphate (FPP) and geranyl diphosphate (GPP) can also be used as allylic substrate. This is Geranylfarnesyl diphosphate synthase (fgs) from Aeropyrum pernix.